The primary structure comprises 374 residues: Probable aminopeptidase YDR415C (374 aa).

An N-terminal signal peptide occupies residues 1–18; it reads MRIQSLFVLFNVAIIAWS. Residues His-177, Asp-196, Glu-235, Asp-262, and His-340 each coordinate Zn(2+).

Belongs to the peptidase M28 family. M28E subfamily. Requires Zn(2+) as cofactor.

The sequence is that of Probable aminopeptidase YDR415C from Saccharomyces cerevisiae (strain ATCC 204508 / S288c) (Baker's yeast).